The chain runs to 301 residues: Probable alpha-L-glutamate ligase 1 (301 aa).

Positions 104–287 (MQLMSRRGIG…VAGAIIAFIE (184 aa)) constitute an ATP-grasp domain. ATP contacts are provided by residues Lys-141, 178–179 (EY), Asp-187, and 211–213 (RSN). Mg(2+) is bound by residues Asp-248, Glu-260, and Asn-262. Positions 248, 260, and 262 each coordinate Mn(2+).

It belongs to the RimK family. Mg(2+) serves as cofactor. Requires Mn(2+) as cofactor.

The polypeptide is Probable alpha-L-glutamate ligase 1 (Shewanella amazonensis (strain ATCC BAA-1098 / SB2B)).